The chain runs to 457 residues: tRNA-2-methylthio-N(6)-dimethylallyladenosine synthase (457 aa).

One can recognise an MTTase N-terminal domain in the interval 3–120; that stretch reads KKVYVKTFGC…LPQMIDKRRE (118 aa). Residues C12, C49, C83, C157, C161, and C164 each contribute to the [4Fe-4S] cluster site. The Radical SAM core domain occupies 143 to 377; sequence RVDGPSAFVS…QATIEENVQR (235 aa). Positions 380-447 constitute a TRAM domain; that stretch reads DSMVGKIERI…PHSLRGELVL (68 aa).

This sequence belongs to the methylthiotransferase family. MiaB subfamily. As to quaternary structure, monomer. [4Fe-4S] cluster serves as cofactor.

It localises to the cytoplasm. The enzyme catalyses N(6)-dimethylallyladenosine(37) in tRNA + (sulfur carrier)-SH + AH2 + 2 S-adenosyl-L-methionine = 2-methylsulfanyl-N(6)-dimethylallyladenosine(37) in tRNA + (sulfur carrier)-H + 5'-deoxyadenosine + L-methionine + A + S-adenosyl-L-homocysteine + 2 H(+). Its function is as follows. Catalyzes the methylthiolation of N6-(dimethylallyl)adenosine (i(6)A), leading to the formation of 2-methylthio-N6-(dimethylallyl)adenosine (ms(2)i(6)A) at position 37 in tRNAs that read codons beginning with uridine. This is tRNA-2-methylthio-N(6)-dimethylallyladenosine synthase from Paraburkholderia xenovorans (strain LB400).